We begin with the raw amino-acid sequence, 336 residues long: Eukaryotic translation initiation factor 3 subunit I (336 aa).

WD repeat units lie at residues 8–49 (GHER…GTYN), 50–91 (GHNG…KAWE), 93–135 (PTAI…GPQP), 144–183 (PIGS…EVAS), 187–226 (NHIG…VIKS), and 285–324 (GGFG…FRAK).

Belongs to the eIF-3 subunit I family. Component of the eukaryotic translation initiation factor 3 (eIF-3) complex.

Its subcellular location is the cytoplasm. Component of the eukaryotic translation initiation factor 3 (eIF-3) complex, which is involved in protein synthesis of a specialized repertoire of mRNAs and, together with other initiation factors, stimulates binding of mRNA and methionyl-tRNAi to the 40S ribosome. The eIF-3 complex specifically targets and initiates translation of a subset of mRNAs involved in cell proliferation. In Puccinia graminis f. sp. tritici (strain CRL 75-36-700-3 / race SCCL) (Black stem rust fungus), this protein is Eukaryotic translation initiation factor 3 subunit I.